A 290-amino-acid polypeptide reads, in one-letter code: Protoheme IX farnesyltransferase (290 aa).

Helical transmembrane passes span 8-28 (LTKPGIIMGNLISVLAGYFLA), 36-56 (LSLLVYTMLGVALVIASGCVV), 81-101 (INIEFAFLFAIIMLLIGTGLL), 108-128 (LSAVMVLLGYVFYVFFYTMWY), 133-153 (VYGTLVGSVSGAIPPLVGYLA), 163-183 (VLLFGLFCLWQMPHSYAIAMF), 209-229 (IMIYVLVFSVVALGLYAFGHT), 230-247 (GYEYLAVVAISCYGWFKV), and 270-290 (LAITAFSTVLGIELLPFSITF).

This sequence belongs to the UbiA prenyltransferase family. Protoheme IX farnesyltransferase subfamily.

The protein resides in the cell inner membrane. It carries out the reaction heme b + (2E,6E)-farnesyl diphosphate + H2O = Fe(II)-heme o + diphosphate. It functions in the pathway porphyrin-containing compound metabolism; heme O biosynthesis; heme O from protoheme: step 1/1. In terms of biological role, converts heme B (protoheme IX) to heme O by substitution of the vinyl group on carbon 2 of heme B porphyrin ring with a hydroxyethyl farnesyl side group. The sequence is that of Protoheme IX farnesyltransferase from Aliivibrio salmonicida (strain LFI1238) (Vibrio salmonicida (strain LFI1238)).